Consider the following 417-residue polypeptide: MAEIKNYTLNFGPQHPAAHGVLRLVLELDGEVIQRADPHIGLLHRATEKLAESKTFIQSVPYMDRLDYVSMMVNEHGYVLAIEKLLGIEVPERAQYIRVLFDEITRVLNHLMWIGAHALDVGAMAVFLYAFREREDLMDVYEAVSGARMHAAYYRPGGVYRDLPEAMPQYKASKIRNERALAKMNEARSGSVLDFIDDFFTRFPKCVDEYETLLTDNRIWKQRLVGIGVVSPERALQLGLTGPMIRGSGIAWDLRKKQPYEVYDRIDFDIPVGVNGDCYDRYLVRVEEMRQSTRIAKQCIEWLRENPGPVITDNHKVAPPSRVGMKTNMEDLIHHFKLFTEGFHVPEGEAYAAVEHPKGEFGIYLVSDGANKPYRLKIRAPGYAHLSALDEMARGHMIADAVTIIGTQDIVFGEIDR.

The protein belongs to the complex I 49 kDa subunit family. In terms of assembly, NDH-1 is composed of 14 different subunits. Subunits NuoB, C, D, E, F, and G constitute the peripheral sector of the complex.

It is found in the cell inner membrane. It catalyses the reaction a quinone + NADH + 5 H(+)(in) = a quinol + NAD(+) + 4 H(+)(out). Its function is as follows. NDH-1 shuttles electrons from NADH, via FMN and iron-sulfur (Fe-S) centers, to quinones in the respiratory chain. The immediate electron acceptor for the enzyme in this species is believed to be ubiquinone. Couples the redox reaction to proton translocation (for every two electrons transferred, four hydrogen ions are translocated across the cytoplasmic membrane), and thus conserves the redox energy in a proton gradient. The protein is NADH-quinone oxidoreductase subunit D of Burkholderia thailandensis (strain ATCC 700388 / DSM 13276 / CCUG 48851 / CIP 106301 / E264).